Consider the following 509-residue polypeptide: Maturase K (509 aa).

It belongs to the intron maturase 2 family. MatK subfamily.

It is found in the plastid. Its subcellular location is the chloroplast. Its function is as follows. Usually encoded in the trnK tRNA gene intron. Probably assists in splicing its own and other chloroplast group II introns. The protein is Maturase K of Vachellia farnesiana (Sweet acacia).